The sequence spans 148 residues: Probable TtuB-protein conjugate cleaving protease (148 aa).

Positions H22 to L148 constitute an MPN domain. The active-site Proton donor/acceptor is the E47. Zn(2+) is bound by residues H101, H103, and D114. Positions H101–D114 match the JAMM motif motif.

The protein belongs to the peptidase M67B family. It depends on Zn(2+) as a cofactor.

In terms of biological role, probable metalloprotease that cleaves the ubiquitin-like modifier protein TtuB from protein conjugates, hydrolyzing the isopeptide bond between a lysine residue of the target protein and the C-terminal glycine of the modifier protein. Does not seem to work for all the TtuB conjugates. The polypeptide is Probable TtuB-protein conjugate cleaving protease (Thermus thermophilus (strain ATCC BAA-163 / DSM 7039 / HB27)).